The following is a 505-amino-acid chain: Probable cytosol aminopeptidase (505 aa).

Residues Lys269 and Asp274 each coordinate Mn(2+). Lys281 is a catalytic residue. The Mn(2+) site is built by Asp292, Asp351, and Glu353. Arg355 is a catalytic residue.

It belongs to the peptidase M17 family. It depends on Mn(2+) as a cofactor.

Its subcellular location is the cytoplasm. It catalyses the reaction Release of an N-terminal amino acid, Xaa-|-Yaa-, in which Xaa is preferably Leu, but may be other amino acids including Pro although not Arg or Lys, and Yaa may be Pro. Amino acid amides and methyl esters are also readily hydrolyzed, but rates on arylamides are exceedingly low.. The catalysed reaction is Release of an N-terminal amino acid, preferentially leucine, but not glutamic or aspartic acids.. In terms of biological role, presumably involved in the processing and regular turnover of intracellular proteins. Catalyzes the removal of unsubstituted N-terminal amino acids from various peptides. The chain is Probable cytosol aminopeptidase from Rhodococcus jostii (strain RHA1).